The sequence spans 584 residues: Sodium/calcium exchanger NCL1 (584 aa).

5 consecutive transmembrane segments (helical) span residues 77-97 (FLPC…YGFL), 120-140 (LVGG…LVLV), 154-174 (VLIG…LLWG), 215-235 (AARI…PKML), and 245-265 (VLLA…YQVF). EF-hand domains follow at residues 305–340 (PNED…INFE) and 345–380 (DKND…WLNE). 9 residues coordinate Ca(2+): aspartate 318, aspartate 320, serine 322, threonine 324, glutamate 329, aspartate 358, serine 360, asparagine 362, and glutamate 369. A run of 5 helical transmembrane segments spans residues 426 to 446 (WCIT…AAFA), 466 to 486 (FISF…SAII), 504 to 524 (YGGV…LIYI), 531 to 551 (FSSE…FTSF), and 561 to 581 (LVAY…DFVF).

Belongs to the Ca(2+):cation antiporter (CaCA) (TC 2.A.19) family.

It localises to the cell membrane. Its function is as follows. May function as a sodium/calcium exchanger (NCX) and participate in the maintenance of calcium homeostasis. May play a role abiotic stress responses. The protein is Sodium/calcium exchanger NCL1 of Oryza sativa subsp. japonica (Rice).